The chain runs to 987 residues: Transposase for transposon Tn4430 (987 aa).

It belongs to the transposase 7 family.

Functionally, required for transposition of transposon Tn4430. This is Transposase for transposon Tn4430 (tnpA) from Bacillus thuringiensis.